A 154-amino-acid polypeptide reads, in one-letter code: D-aminoacyl-tRNA deacylase (154 aa).

Residues 142-143 carry the Gly-cisPro motif, important for rejection of L-amino acids motif; that stretch reads GP.

It belongs to the DTD family. In terms of assembly, homodimer.

It localises to the cytoplasm. The enzyme catalyses glycyl-tRNA(Ala) + H2O = tRNA(Ala) + glycine + H(+). The catalysed reaction is a D-aminoacyl-tRNA + H2O = a tRNA + a D-alpha-amino acid + H(+). An aminoacyl-tRNA editing enzyme that deacylates mischarged D-aminoacyl-tRNAs. Also deacylates mischarged glycyl-tRNA(Ala), protecting cells against glycine mischarging by AlaRS. Acts via tRNA-based rather than protein-based catalysis; rejects L-amino acids rather than detecting D-amino acids in the active site. By recycling D-aminoacyl-tRNA to D-amino acids and free tRNA molecules, this enzyme counteracts the toxicity associated with the formation of D-aminoacyl-tRNA entities in vivo and helps enforce protein L-homochirality. In Acidovorax sp. (strain JS42), this protein is D-aminoacyl-tRNA deacylase.